A 352-amino-acid polypeptide reads, in one-letter code: Peptide chain release factor 1 (352 aa).

At Q230 the chain carries N5-methylglutamine.

Belongs to the prokaryotic/mitochondrial release factor family. In terms of processing, methylated by PrmC. Methylation increases the termination efficiency of RF1.

The protein localises to the cytoplasm. Peptide chain release factor 1 directs the termination of translation in response to the peptide chain termination codons UAG and UAA. This chain is Peptide chain release factor 1, found in Exiguobacterium sibiricum (strain DSM 17290 / CCUG 55495 / CIP 109462 / JCM 13490 / 255-15).